Consider the following 355-residue polypeptide: UDP-N-acetylglucosamine--N-acetylmuramyl-(pentapeptide) pyrophosphoryl-undecaprenol N-acetylglucosamine transferase (355 aa).

UDP-N-acetyl-alpha-D-glucosamine is bound by residues 14–16, Asn126, Arg164, Ser190, Ile243, 262–267, and Gln288; these read TGG and ALTVAE.

This sequence belongs to the glycosyltransferase 28 family. MurG subfamily.

It localises to the cell inner membrane. It carries out the reaction di-trans,octa-cis-undecaprenyl diphospho-N-acetyl-alpha-D-muramoyl-L-alanyl-D-glutamyl-meso-2,6-diaminopimeloyl-D-alanyl-D-alanine + UDP-N-acetyl-alpha-D-glucosamine = di-trans,octa-cis-undecaprenyl diphospho-[N-acetyl-alpha-D-glucosaminyl-(1-&gt;4)]-N-acetyl-alpha-D-muramoyl-L-alanyl-D-glutamyl-meso-2,6-diaminopimeloyl-D-alanyl-D-alanine + UDP + H(+). The protein operates within cell wall biogenesis; peptidoglycan biosynthesis. Its function is as follows. Cell wall formation. Catalyzes the transfer of a GlcNAc subunit on undecaprenyl-pyrophosphoryl-MurNAc-pentapeptide (lipid intermediate I) to form undecaprenyl-pyrophosphoryl-MurNAc-(pentapeptide)GlcNAc (lipid intermediate II). This is UDP-N-acetylglucosamine--N-acetylmuramyl-(pentapeptide) pyrophosphoryl-undecaprenol N-acetylglucosamine transferase from Psychromonas ingrahamii (strain DSM 17664 / CCUG 51855 / 37).